The sequence spans 323 residues: Cytochrome c biogenesis protein CcsA (323 aa).

A run of 8 helical transmembrane segments spans residues 9–29 (ILTH…LLNL), 45–62 (MMAT…RWIY), 71–91 (LYES…VPYF), 98–118 (LSAI…SGLL), 143–163 (MLLG…LLVI), 227–247 (IISL…VWAN), 261–275 (TWAF…IYLH), and 285–305 (VGPA…YFGV).

This sequence belongs to the CcmF/CycK/Ccl1/NrfE/CcsA family. In terms of assembly, may interact with Ccs1.

It is found in the plastid. It localises to the chloroplast thylakoid membrane. Required during biogenesis of c-type cytochromes (cytochrome c6 and cytochrome f) at the step of heme attachment. This chain is Cytochrome c biogenesis protein CcsA, found in Calycanthus floridus var. glaucus (Eastern sweetshrub).